A 123-amino-acid polypeptide reads, in one-letter code: IHPTSVISGYRYISENLIINTDELGRDCLINAAKLGVQVVITDPEKLDQIRYFVEAGAMAVRSVVPGGGAVEAALSIYLENYATSMGSREQLAIAEFARAFHNEAQVNPERKFATEAAITILR.

Gly-68 serves as a coordination point for ADP.

This sequence belongs to the TCP-1 chaperonin family. In terms of assembly, component of the chaperonin-containing T-complex (TRiC), a hexadecamer composed of two identical back-to-back stacked rings enclosing a protein folding chamber. Each ring is made up of eight different subunits: TCP1/CCT1, CCT2, CCT3, CCT4, CCT5, CCT6A/CCT6, CCT7, CCT8. Interacts with PACRG. Interacts with GBA1. Interacts with DLEC1.

It localises to the cytoplasm. The protein resides in the cytosol. Its subcellular location is the cytoskeleton. It is found in the microtubule organizing center. The protein localises to the centrosome. The enzyme catalyses ATP + H2O = ADP + phosphate + H(+). In terms of biological role, component of the chaperonin-containing T-complex (TRiC), a molecular chaperone complex that assists the folding of actin, tubulin and other proteins upon ATP hydrolysis. The TRiC complex mediates the folding of WRAP53/TCAB1, thereby regulating telomere maintenance. As part of the TRiC complex may play a role in the assembly of BBSome, a complex involved in ciliogenesis regulating transports vesicles to the cilia. This Mesocricetus auratus (Golden hamster) protein is T-complex protein 1 subunit alpha.